Consider the following 553-residue polypeptide: Ubiquitin carboxyl-terminal hydrolase 17-like protein 15 (553 aa).

Residues 80–375 form the USP domain; sequence AGLQNMGNTC…QAYVLFYIQK (296 aa). Cysteine 89 functions as the Nucleophile in the catalytic mechanism. The active-site Proton acceptor is histidine 334. Basic and acidic residues-rich tracts occupy residues 382 to 392 and 398 to 413; these read SESVSRGREPR and DTDR…RDHP. Disordered regions lie at residues 382–413 and 491–524; these read SESV…RDHP and STTP…HSKR. Residues 496 to 505 show a composition bias toward polar residues; it reads HQESMNTGTL. Basic residues predominate over residues 510 to 524; that stretch reads GRARRSKGKNKHSKR.

This sequence belongs to the peptidase C19 family. USP17 subfamily.

It is found in the nucleus. The protein resides in the endoplasmic reticulum. It carries out the reaction Thiol-dependent hydrolysis of ester, thioester, amide, peptide and isopeptide bonds formed by the C-terminal Gly of ubiquitin (a 76-residue protein attached to proteins as an intracellular targeting signal).. Functionally, deubiquitinating enzyme that removes conjugated ubiquitin from specific proteins to regulate different cellular processes that may include cell proliferation, progression through the cell cycle, apoptosis, cell migration, and the cellular response to viral infection. This is Ubiquitin carboxyl-terminal hydrolase 17-like protein 15 (USP17L15) from Homo sapiens (Human).